The chain runs to 223 residues: Proteinase inhibitor type-2 TR8 (223 aa).

The signal sequence occupies residues Met-1 to Ala-24. 3 consecutive repeat copies span residues Ala-24–Ser-81, Lys-88–Ser-145, and Glu-152–Ser-209. 8 disulfide bridges follow: Cys-27/Cys-120, Cys-31/Cys-116, Cys-40/Cys-126, Cys-52/Cys-95, Cys-55/Cys-73, Cys-56/Cys-91, Cys-62/Cys-104, and Cys-119/Cys-137.

This sequence belongs to the protease inhibitor I20 (potato type II proteinase inhibitor) family.

The polypeptide is Proteinase inhibitor type-2 TR8 (ARPI) (Solanum lycopersicum (Tomato)).